The following is a 347-amino-acid chain: tRNA N6-adenosine threonylcarbamoyltransferase (347 aa).

Positions 110 and 114 each coordinate Fe cation. Residues 133–137 (VVSGG), aspartate 168, glycine 181, aspartate 185, and asparagine 277 each bind substrate. Aspartate 305 contacts Fe cation.

Belongs to the KAE1 / TsaD family. Fe(2+) is required as a cofactor.

It is found in the cytoplasm. It catalyses the reaction L-threonylcarbamoyladenylate + adenosine(37) in tRNA = N(6)-L-threonylcarbamoyladenosine(37) in tRNA + AMP + H(+). Its function is as follows. Required for the formation of a threonylcarbamoyl group on adenosine at position 37 (t(6)A37) in tRNAs that read codons beginning with adenine. Is involved in the transfer of the threonylcarbamoyl moiety of threonylcarbamoyl-AMP (TC-AMP) to the N6 group of A37, together with TsaE and TsaB. TsaD likely plays a direct catalytic role in this reaction. In Kineococcus radiotolerans (strain ATCC BAA-149 / DSM 14245 / SRS30216), this protein is tRNA N6-adenosine threonylcarbamoyltransferase.